A 156-amino-acid chain; its full sequence is Ribosome maturation factor RimP (156 aa).

It belongs to the RimP family.

It localises to the cytoplasm. In terms of biological role, required for maturation of 30S ribosomal subunits. The polypeptide is Ribosome maturation factor RimP (Treponema pallidum (strain Nichols)).